Here is a 274-residue protein sequence, read N- to C-terminus: 4-diphosphocytidyl-2-C-methyl-D-erythritol kinase (274 aa).

The active site involves Lys14. 94–104 lines the ATP pocket; it reads PMQAGLGGGSS. The active site involves Asp134.

It belongs to the GHMP kinase family. IspE subfamily.

It carries out the reaction 4-CDP-2-C-methyl-D-erythritol + ATP = 4-CDP-2-C-methyl-D-erythritol 2-phosphate + ADP + H(+). Its pathway is isoprenoid biosynthesis; isopentenyl diphosphate biosynthesis via DXP pathway; isopentenyl diphosphate from 1-deoxy-D-xylulose 5-phosphate: step 3/6. Its function is as follows. Catalyzes the phosphorylation of the position 2 hydroxy group of 4-diphosphocytidyl-2C-methyl-D-erythritol. This chain is 4-diphosphocytidyl-2-C-methyl-D-erythritol kinase, found in Thermosipho melanesiensis (strain DSM 12029 / CIP 104789 / BI429).